The primary structure comprises 336 residues: tRNA N6-adenosine threonylcarbamoyltransferase (336 aa).

2 residues coordinate Fe cation: His114 and His118. Residues 136 to 140, Asp169, Gly182, Asp186, and Asn275 contribute to the substrate site; that span reads LVSGG. Asp302 contacts Fe cation.

This sequence belongs to the KAE1 / TsaD family. Fe(2+) is required as a cofactor.

It localises to the cytoplasm. It carries out the reaction L-threonylcarbamoyladenylate + adenosine(37) in tRNA = N(6)-L-threonylcarbamoyladenosine(37) in tRNA + AMP + H(+). Its function is as follows. Required for the formation of a threonylcarbamoyl group on adenosine at position 37 (t(6)A37) in tRNAs that read codons beginning with adenine. Is involved in the transfer of the threonylcarbamoyl moiety of threonylcarbamoyl-AMP (TC-AMP) to the N6 group of A37, together with TsaE and TsaB. TsaD likely plays a direct catalytic role in this reaction. The chain is tRNA N6-adenosine threonylcarbamoyltransferase from Streptococcus agalactiae serotype V (strain ATCC BAA-611 / 2603 V/R).